A 279-amino-acid polypeptide reads, in one-letter code: MTRPLSYFHLHLISDATGETLLAAGRAAAAQYANARAIEHIYPLIRTEKQLRKVLEGIDAEPGIVLYTVVDQKLAAIIDESCADMGVPSVSVLEPVLNTFQSYLGAPAHRRASAQHVLNADYFRRIDALNFMMEHDDGQLPLDIEEADVIIVGISRTSKTPTSIYLANRGIKAANVPLVLGIPVPEILFAAKRPLIVGLVATAERISQIRQNRPLGNIPSLDTGLYTDRVSISEELAYARNLCNRHGWPIIDVSRRSIEETAAAILALLRNGKKEGSSS.

Residue 153 to 160 participates in ADP binding; it reads GISRTSKT.

The protein belongs to the pyruvate, phosphate/water dikinase regulatory protein family. PDRP subfamily.

The enzyme catalyses N(tele)-phospho-L-histidyl/L-threonyl-[pyruvate, phosphate dikinase] + ADP = N(tele)-phospho-L-histidyl/O-phospho-L-threonyl-[pyruvate, phosphate dikinase] + AMP + H(+). It carries out the reaction N(tele)-phospho-L-histidyl/O-phospho-L-threonyl-[pyruvate, phosphate dikinase] + phosphate + H(+) = N(tele)-phospho-L-histidyl/L-threonyl-[pyruvate, phosphate dikinase] + diphosphate. Its function is as follows. Bifunctional serine/threonine kinase and phosphorylase involved in the regulation of the pyruvate, phosphate dikinase (PPDK) by catalyzing its phosphorylation/dephosphorylation. This chain is Putative pyruvate, phosphate dikinase regulatory protein, found in Brucella abortus (strain 2308).